Here is a 179-residue protein sequence, read N- to C-terminus: ATP synthase subunit delta (179 aa).

It belongs to the ATPase delta chain family. In terms of assembly, F-type ATPases have 2 components, F(1) - the catalytic core - and F(0) - the membrane proton channel. F(1) has five subunits: alpha(3), beta(3), gamma(1), delta(1), epsilon(1). F(0) has three main subunits: a(1), b(2) and c(10-14). The alpha and beta chains form an alternating ring which encloses part of the gamma chain. F(1) is attached to F(0) by a central stalk formed by the gamma and epsilon chains, while a peripheral stalk is formed by the delta and b chains.

The protein resides in the cell inner membrane. In terms of biological role, f(1)F(0) ATP synthase produces ATP from ADP in the presence of a proton or sodium gradient. F-type ATPases consist of two structural domains, F(1) containing the extramembraneous catalytic core and F(0) containing the membrane proton channel, linked together by a central stalk and a peripheral stalk. During catalysis, ATP synthesis in the catalytic domain of F(1) is coupled via a rotary mechanism of the central stalk subunits to proton translocation. Its function is as follows. This protein is part of the stalk that links CF(0) to CF(1). It either transmits conformational changes from CF(0) to CF(1) or is implicated in proton conduction. The chain is ATP synthase subunit delta from Anaeromyxobacter dehalogenans (strain 2CP-C).